Consider the following 251-residue polypeptide: Elongation factor Ts (251 aa).

The tract at residues 82-85 (TDFV) is involved in Mg(2+) ion dislocation from EF-Tu. Residues 215–251 (QMGQKAPEPVAAAPQVEEKAPEPAAKDNPPAKGKKKK) form a disordered region. The span at 219–229 (KAPEPVAAAPQ) shows a compositional bias: low complexity. Basic and acidic residues predominate over residues 230–239 (VEEKAPEPAA).

The protein belongs to the EF-Ts family.

It is found in the cytoplasm. Functionally, associates with the EF-Tu.GDP complex and induces the exchange of GDP to GTP. It remains bound to the aminoacyl-tRNA.EF-Tu.GTP complex up to the GTP hydrolysis stage on the ribosome. This is Elongation factor Ts from Microcystis aeruginosa (strain NIES-843 / IAM M-2473).